The chain runs to 392 residues: Queuine tRNA-ribosyltransferase (392 aa).

Residue D93 is the Proton acceptor of the active site. Residues 93–97 (DSGGY), D147, Q189, and G216 contribute to the substrate site. The interval 247-253 (GVGAPED) is RNA binding. The active-site Nucleophile is D266. An RNA binding; important for wobble base 34 recognition region spans residues 271 to 275 (TRVAR). 4 residues coordinate Zn(2+): C304, C306, C309, and H335.

Belongs to the queuine tRNA-ribosyltransferase family. Homodimer. Within each dimer, one monomer is responsible for RNA recognition and catalysis, while the other monomer binds to the replacement base PreQ1. It depends on Zn(2+) as a cofactor.

It catalyses the reaction 7-aminomethyl-7-carbaguanine + guanosine(34) in tRNA = 7-aminomethyl-7-carbaguanosine(34) in tRNA + guanine. The protein operates within tRNA modification; tRNA-queuosine biosynthesis. Catalyzes the base-exchange of a guanine (G) residue with the queuine precursor 7-aminomethyl-7-deazaguanine (PreQ1) at position 34 (anticodon wobble position) in tRNAs with GU(N) anticodons (tRNA-Asp, -Asn, -His and -Tyr). Catalysis occurs through a double-displacement mechanism. The nucleophile active site attacks the C1' of nucleotide 34 to detach the guanine base from the RNA, forming a covalent enzyme-RNA intermediate. The proton acceptor active site deprotonates the incoming PreQ1, allowing a nucleophilic attack on the C1' of the ribose to form the product. After dissociation, two additional enzymatic reactions on the tRNA convert PreQ1 to queuine (Q), resulting in the hypermodified nucleoside queuosine (7-(((4,5-cis-dihydroxy-2-cyclopenten-1-yl)amino)methyl)-7-deazaguanosine). This Dehalococcoides mccartyi (strain ATCC BAA-2100 / JCM 16839 / KCTC 5957 / BAV1) protein is Queuine tRNA-ribosyltransferase.